The chain runs to 530 residues: Ubiquitin carboxyl-terminal hydrolase 17-like protein 24 (530 aa).

In terms of domain architecture, USP spans 80 to 375 (AGLQNMGNTC…QAYVLFYIQK (296 aa)). Catalysis depends on Cys89, which acts as the Nucleophile. His334 functions as the Proton acceptor in the catalytic mechanism. Basic and acidic residues-rich tracts occupy residues 382 to 392 (SESVSRGREPR) and 398 to 412 (DTDR…KRDH). Disordered regions lie at residues 382–412 (SESV…KRDH) and 477–530 (NHHP…LVCQ). The span at 493–505 (TPTHQESMNTGTL) shows a compositional bias: polar residues. Residues 510–524 (GRARRSKGKNKHSKR) are compositionally biased toward basic residues.

This sequence belongs to the peptidase C19 family. USP17 subfamily. As to expression, expressed in heart, brain, liver and skeletal muscle.

It localises to the nucleus. It is found in the nucleolus. The protein localises to the endoplasmic reticulum. It carries out the reaction Thiol-dependent hydrolysis of ester, thioester, amide, peptide and isopeptide bonds formed by the C-terminal Gly of ubiquitin (a 76-residue protein attached to proteins as an intracellular targeting signal).. In terms of biological role, deubiquitinating enzyme that removes conjugated ubiquitin from specific proteins to regulate different cellular processes that may include cell proliferation, progression through the cell cycle, apoptosis, cell migration, and the cellular response to viral infection. The chain is Ubiquitin carboxyl-terminal hydrolase 17-like protein 24 (USP17L24) from Homo sapiens (Human).